Reading from the N-terminus, the 424-residue chain is Serine hydroxymethyltransferase (424 aa).

(6S)-5,6,7,8-tetrahydrofolate-binding positions include Leu126 and 130–132; that span reads GHL. The residue at position 235 (Lys235) is an N6-(pyridoxal phosphate)lysine. 359-361 contacts (6S)-5,6,7,8-tetrahydrofolate; the sequence is SPF.

The protein belongs to the SHMT family. Homodimer. It depends on pyridoxal 5'-phosphate as a cofactor.

The protein resides in the cytoplasm. It carries out the reaction (6R)-5,10-methylene-5,6,7,8-tetrahydrofolate + glycine + H2O = (6S)-5,6,7,8-tetrahydrofolate + L-serine. The protein operates within one-carbon metabolism; tetrahydrofolate interconversion. It functions in the pathway amino-acid biosynthesis; glycine biosynthesis; glycine from L-serine: step 1/1. Its function is as follows. Catalyzes the reversible interconversion of serine and glycine with tetrahydrofolate (THF) serving as the one-carbon carrier. This reaction serves as the major source of one-carbon groups required for the biosynthesis of purines, thymidylate, methionine, and other important biomolecules. Also exhibits THF-independent aldolase activity toward beta-hydroxyamino acids, producing glycine and aldehydes, via a retro-aldol mechanism. The protein is Serine hydroxymethyltransferase of Prochlorococcus marinus (strain MIT 9303).